The sequence spans 162 residues: SsrA-binding protein (162 aa).

Over residues 137 to 154 (HDKREDTKAREWDREKAR) the composition is skewed to basic and acidic residues. The interval 137-162 (HDKREDTKAREWDREKARIMKNKHRG) is disordered.

The protein belongs to the SmpB family.

The protein localises to the cytoplasm. Required for rescue of stalled ribosomes mediated by trans-translation. Binds to transfer-messenger RNA (tmRNA), required for stable association of tmRNA with ribosomes. tmRNA and SmpB together mimic tRNA shape, replacing the anticodon stem-loop with SmpB. tmRNA is encoded by the ssrA gene; the 2 termini fold to resemble tRNA(Ala) and it encodes a 'tag peptide', a short internal open reading frame. During trans-translation Ala-aminoacylated tmRNA acts like a tRNA, entering the A-site of stalled ribosomes, displacing the stalled mRNA. The ribosome then switches to translate the ORF on the tmRNA; the nascent peptide is terminated with the 'tag peptide' encoded by the tmRNA and targeted for degradation. The ribosome is freed to recommence translation, which seems to be the essential function of trans-translation. The chain is SsrA-binding protein from Aeromonas hydrophila subsp. hydrophila (strain ATCC 7966 / DSM 30187 / BCRC 13018 / CCUG 14551 / JCM 1027 / KCTC 2358 / NCIMB 9240 / NCTC 8049).